Reading from the N-terminus, the 503-residue chain is Glycoprotein 3-alpha-L-fucosyltransferase A (503 aa).

The Cytoplasmic portion of the chain corresponds to 1 to 10 (MRRPKISLKK). A helical; Signal-anchor for type II membrane protein membrane pass occupies residues 11–28 (YFYLTLICALLLIFGFSL). Over 29 to 503 (KEREIWKTLS…KDVISDSSDD (475 aa)) the chain is Lumenal. The interval 44 to 71 (ITTQQQQHQHLHQLQSMDEEHPMATSST) is disordered. The segment covering 47 to 58 (QQQQHQHLHQLQ) has biased composition (low complexity). N-linked (GlcNAc...) asparagine glycans are attached at residues Asn262, Asn295, and Asn299.

The protein belongs to the glycosyltransferase 10 family. It depends on Mn(2+) as a cofactor.

Its subcellular location is the golgi apparatus. The protein resides in the golgi stack membrane. It catalyses the reaction N(4)-{beta-D-GlcNAc-(1-&gt;2)-alpha-D-Man-(1-&gt;3)-[beta-D-GlcNAc-(1-&gt;2)-alpha-D-Man-(1-&gt;6)]-beta-D-Man-(1-&gt;4)-beta-D-GlcNAc-(1-&gt;4)-beta-D-GlcNAc}-L-asparaginyl-[protein] + GDP-beta-L-fucose = N(4)-{beta-D-GlcNAc-(1-&gt;2)-alpha-D-Man-(1-&gt;3)-[beta-D-GlcNAc-(1-&gt;2)-alpha-D-Man-(1-&gt;6)]-beta-D-Man-(1-&gt;4)-beta-D-GlcNAc-(1-&gt;4)-[alpha-L-Fuc(1-&gt;3)]-beta-D-GlcNAc}-L-asparaginyl-[protein] + GDP + H(+). It participates in protein modification; protein glycosylation. In terms of biological role, catalyzes alpha-1,3 glycosidic linkages of N-glycans. Plays a role in neuronal development by promoting ventral nerve cord formation, possibly by promoting interactions between migrating cells and the extracellular matrix or by promoting neural activity. This chain is Glycoprotein 3-alpha-L-fucosyltransferase A (FucTA), found in Drosophila melanogaster (Fruit fly).